The primary structure comprises 595 residues: NADH-quinone oxidoreductase subunit C/D (595 aa).

Residues 1-186 (MVTDNSKATD…TPYFLNNAKQ (186 aa)) are NADH dehydrogenase I subunit C. The segment at 210–595 (DFMFLNLGPN…IDIVMADTDR (386 aa)) is NADH dehydrogenase I subunit D.

This sequence in the N-terminal section; belongs to the complex I 30 kDa subunit family. The protein in the C-terminal section; belongs to the complex I 49 kDa subunit family. As to quaternary structure, NDH-1 is composed of 13 different subunits. Subunits NuoB, CD, E, F, and G constitute the peripheral sector of the complex.

Its subcellular location is the cell inner membrane. The enzyme catalyses a quinone + NADH + 5 H(+)(in) = a quinol + NAD(+) + 4 H(+)(out). NDH-1 shuttles electrons from NADH, via FMN and iron-sulfur (Fe-S) centers, to quinones in the respiratory chain. The immediate electron acceptor for the enzyme in this species is believed to be ubiquinone. Couples the redox reaction to proton translocation (for every two electrons transferred, four hydrogen ions are translocated across the cytoplasmic membrane), and thus conserves the redox energy in a proton gradient. The sequence is that of NADH-quinone oxidoreductase subunit C/D from Psychrobacter sp. (strain PRwf-1).